The chain runs to 263 residues: Endonuclease 8 (263 aa).

Pro2 functions as the Schiff-base intermediate with DNA in the catalytic mechanism. Glu3 serves as the catalytic Proton donor. The Proton donor; for beta-elimination activity role is filled by Lys53. Gln70, Arg125, and Asn169 together coordinate DNA. Residues 229–263 (KVFHRDGEVCERCGGIIEKTTLSSRPFYWCPHCQK) form an FPG-type zinc finger. Arg253 (proton donor; for delta-elimination activity) is an active-site residue.

Belongs to the FPG family. It depends on Zn(2+) as a cofactor.

The enzyme catalyses 2'-deoxyribonucleotide-(2'-deoxyribose 5'-phosphate)-2'-deoxyribonucleotide-DNA = a 3'-end 2'-deoxyribonucleotide-(2,3-dehydro-2,3-deoxyribose 5'-phosphate)-DNA + a 5'-end 5'-phospho-2'-deoxyribonucleoside-DNA + H(+). In terms of biological role, involved in base excision repair of DNA damaged by oxidation or by mutagenic agents. Acts as a DNA glycosylase that recognizes and removes damaged bases. Has a preference for oxidized pyrimidines, such as thymine glycol, 5,6-dihydrouracil and 5,6-dihydrothymine. Has AP (apurinic/apyrimidinic) lyase activity and introduces nicks in the DNA strand. Cleaves the DNA backbone by beta-delta elimination to generate a single-strand break at the site of the removed base with both 3'- and 5'-phosphates. The polypeptide is Endonuclease 8 (Salmonella newport (strain SL254)).